Here is a 474-residue protein sequence, read N- to C-terminus: Ribulose bisphosphate carboxylase large chain (474 aa).

Positions 122 and 172 each coordinate substrate. Lys174 functions as the Proton acceptor in the catalytic mechanism. Lys176 serves as a coordination point for substrate. Residues Lys200, Asp202, and Glu203 each coordinate Mg(2+). Lys200 is modified (N6-carboxylysine). His293 acts as the Proton acceptor in catalysis. Substrate contacts are provided by Arg294, His326, and Ser378.

The protein belongs to the RuBisCO large chain family. Type I subfamily. Heterohexadecamer of 8 large chains and 8 small chains; disulfide-linked. The disulfide link is formed within the large subunit homodimers. Mg(2+) is required as a cofactor. In terms of processing, the disulfide bond which can form in the large chain dimeric partners within the hexadecamer appears to be associated with oxidative stress and protein turnover.

The protein resides in the carboxysome. The catalysed reaction is 2 (2R)-3-phosphoglycerate + 2 H(+) = D-ribulose 1,5-bisphosphate + CO2 + H2O. It catalyses the reaction D-ribulose 1,5-bisphosphate + O2 = 2-phosphoglycolate + (2R)-3-phosphoglycerate + 2 H(+). In terms of biological role, ruBisCO catalyzes two reactions: the carboxylation of D-ribulose 1,5-bisphosphate, the primary event in carbon dioxide fixation, as well as the oxidative fragmentation of the pentose substrate in the photorespiration process. Both reactions occur simultaneously and in competition at the same active site. This is Ribulose bisphosphate carboxylase large chain from Synechococcus sp. (strain JA-2-3B'a(2-13)) (Cyanobacteria bacterium Yellowstone B-Prime).